The sequence spans 365 residues: MLIYLFEWLSHYFKGLEVFSNYISVRIIMISITSLLITLALGRPMISWLQKMQIGQIVRDDGPQSHFSKRNTPTMGGVLILSSVIISCLLWGDLTSIYLWILILVVIFFGAIGFFDDYLKLVLKHPKGLRAKYKFALQSIFSIVLAIVLFYLLSKNGQMSLSIPFSKSLYIPMGIVIFVVLAFFIINGSSNAVNLTDGLDGLAIVPVVLVAAGLGIYAYIETNSTLANYLLFNYLGNPGLAEVAVFCAAVCGSGLAFLWFNSHPAEVFMGDVGSLTLGAVLGVIAVMVRQELIFFIMGLLFVVEALSVMLQVGSYKLRNGKRIFRMAPIHHHFELKGWPETKVVIRFWIISLILFLIGLAAIKVR.

The next 10 helical transmembrane spans lie at 22–42, 74–94, 95–115, 133–153, 168–188, 201–221, 240–260, 267–287, 292–312, and 342–362; these read YISV…LALG, TMGG…WGDL, TSIY…IGFF, YKFA…FYLL, SLYI…IING, GLAI…AYIE, LAEV…FLWF, VFMG…IAVM, LIFF…MLQV, and KVVI…LAAI.

Belongs to the glycosyltransferase 4 family. MraY subfamily. It depends on Mg(2+) as a cofactor.

The protein localises to the cell inner membrane. The enzyme catalyses UDP-N-acetyl-alpha-D-muramoyl-L-alanyl-gamma-D-glutamyl-meso-2,6-diaminopimeloyl-D-alanyl-D-alanine + di-trans,octa-cis-undecaprenyl phosphate = di-trans,octa-cis-undecaprenyl diphospho-N-acetyl-alpha-D-muramoyl-L-alanyl-D-glutamyl-meso-2,6-diaminopimeloyl-D-alanyl-D-alanine + UMP. It functions in the pathway cell wall biogenesis; peptidoglycan biosynthesis. Functionally, catalyzes the initial step of the lipid cycle reactions in the biosynthesis of the cell wall peptidoglycan: transfers peptidoglycan precursor phospho-MurNAc-pentapeptide from UDP-MurNAc-pentapeptide onto the lipid carrier undecaprenyl phosphate, yielding undecaprenyl-pyrophosphoryl-MurNAc-pentapeptide, known as lipid I. The polypeptide is Phospho-N-acetylmuramoyl-pentapeptide-transferase (Francisella tularensis subsp. tularensis (strain WY96-3418)).